The sequence spans 356 residues: Glutamine synthetase cytosolic isozyme 1-1 (356 aa).

One can recognise a GS beta-grasp domain in the interval 19–99 (IIAEYIWIGG…VMCDCYTPAG (81 aa)). One can recognise a GS catalytic domain in the interval 106 to 356 (KRHNAAKIFS…IAETTIIWKP (251 aa)).

It belongs to the glutamine synthetase family. As to quaternary structure, homooctamer. In terms of tissue distribution, highly expressed in leaf blades, at intermediate levels in spikelets (rice flower) and at lower levels in roots.

It is found in the cytoplasm. It catalyses the reaction L-glutamate + NH4(+) + ATP = L-glutamine + ADP + phosphate + H(+). In terms of biological role, high-affinity glutamine synthetase involved in ammonium assimilation. Seems to be a major component of the cytosolic glutamine synthetic pathway in leaf blades. Plays an important role in maintaining carbon and nitrogen metabolic balance during ammonium assimilation in shoots and roots, thus controlling plant growth and development. Plays an important role in maintaining broad range of metabolites and transcripts involved in the maintenance of plant metabolic homeostasis and development of plastid in roots. The polypeptide is Glutamine synthetase cytosolic isozyme 1-1 (Oryza sativa subsp. japonica (Rice)).